The primary structure comprises 483 residues: Probable glycine dehydrogenase (decarboxylating) subunit 2 (483 aa).

The segment at 1–33 is disordered; it reads MLIFEHSRKNRRNYSQAPATRPAKNNIPDHLKR. Residue K264 is modified to N6-(pyridoxal phosphate)lysine.

Belongs to the GcvP family. C-terminal subunit subfamily. The glycine cleavage system is composed of four proteins: P, T, L and H. In this organism, the P 'protein' is a heterodimer of two subunits. Pyridoxal 5'-phosphate serves as cofactor.

The enzyme catalyses N(6)-[(R)-lipoyl]-L-lysyl-[glycine-cleavage complex H protein] + glycine + H(+) = N(6)-[(R)-S(8)-aminomethyldihydrolipoyl]-L-lysyl-[glycine-cleavage complex H protein] + CO2. Its function is as follows. The glycine cleavage system catalyzes the degradation of glycine. The P protein binds the alpha-amino group of glycine through its pyridoxal phosphate cofactor; CO(2) is released and the remaining methylamine moiety is then transferred to the lipoamide cofactor of the H protein. This chain is Probable glycine dehydrogenase (decarboxylating) subunit 2, found in Nitrosomonas europaea (strain ATCC 19718 / CIP 103999 / KCTC 2705 / NBRC 14298).